Reading from the N-terminus, the 479-residue chain is Ribosomal lysine N-methyltransferase 2 (479 aa).

An SET domain is found at proline 22 to glycine 325. Residue tyrosine 324 participates in S-adenosyl-L-methionine binding.

It belongs to the class V-like SAM-binding methyltransferase superfamily. RKM2 family.

S-adenosyl-L-methionine-dependent protein-lysine N-methyltransferase that trimethylates 60S ribosomal protein L12 (RPL12A and RPL12B) at 'Lys-4' and 'Lys-11'. The sequence is that of Ribosomal lysine N-methyltransferase 2 from Saccharomyces cerevisiae (strain ATCC 204508 / S288c) (Baker's yeast).